A 108-amino-acid polypeptide reads, in one-letter code: Holo-[acyl-carrier-protein] synthase (108 aa).

Residues Asp-9 and Glu-54 each coordinate Mg(2+).

The protein belongs to the P-Pant transferase superfamily. AcpS family. It depends on Mg(2+) as a cofactor.

It localises to the cytoplasm. It catalyses the reaction apo-[ACP] + CoA = holo-[ACP] + adenosine 3',5'-bisphosphate + H(+). In terms of biological role, transfers the 4'-phosphopantetheine moiety from coenzyme A to a Ser of acyl-carrier-protein. In Mycoplasmopsis pulmonis (strain UAB CTIP) (Mycoplasma pulmonis), this protein is Holo-[acyl-carrier-protein] synthase.